A 72-amino-acid chain; its full sequence is MSKNSLEERLAELEMRLAFQDELINTLSDQVAKQEMDIRELWDAKKMLHKQLKDISPSNIRREEEETPPPHY.

The segment at lysine 53–tyrosine 72 is disordered.

The protein belongs to the SlyX family.

This is Protein SlyX homolog from Marinobacter nauticus (strain ATCC 700491 / DSM 11845 / VT8) (Marinobacter aquaeolei).